The sequence spans 435 residues: ATP-dependent protease ATPase subunit HslU (435 aa).

ATP contacts are provided by residues Ile-18, 60-65 (GVGKTE), Asp-248, Glu-313, and Arg-385.

This sequence belongs to the ClpX chaperone family. HslU subfamily. A double ring-shaped homohexamer of HslV is capped on each side by a ring-shaped HslU homohexamer. The assembly of the HslU/HslV complex is dependent on binding of ATP.

Its subcellular location is the cytoplasm. Its function is as follows. ATPase subunit of a proteasome-like degradation complex; this subunit has chaperone activity. The binding of ATP and its subsequent hydrolysis by HslU are essential for unfolding of protein substrates subsequently hydrolyzed by HslV. HslU recognizes the N-terminal part of its protein substrates and unfolds these before they are guided to HslV for hydrolysis. The sequence is that of ATP-dependent protease ATPase subunit HslU from Rhizobium leguminosarum bv. trifolii (strain WSM2304).